The primary structure comprises 3005 residues: Highly reducing polyketide synthase AFT9-1 (3005 aa).

The region spanning 1-337 (MDPQQRLLLE…GTNAHAILER (337 aa)) is the Ketosynthase family 3 (KS3) domain. Active-site for beta-ketoacyl synthase activity residues include C87, H222, and H260. The tract at residues 437–751 (VFTGQGAQWP…SYMSALVRGS (315 aa)) is malonyl-CoA:ACP transacylase (MAT) domain. Positions 821–936 (HDLLGLKMTD…GSVEVKYAAA (116 aa)) are N-terminal hotdog fold. The interval 821 to 1114 (HDLLGLKMTD…SGLELRRLAP (294 aa)) is dehydratase (DH) domain. One can recognise a PKS/mFAS DH domain in the interval 821–1118 (HDLLGLKMTD…LRRLAPTGQP (298 aa)). The Proton acceptor; for dehydratase activity role is filled by H853. A C-terminal hotdog fold region spans residues 963 to 1118 (IEKISSQELY…LRRLAPTGQP (156 aa)). D1028 acts as the Proton donor; for dehydratase activity in catalysis. Residues 1259–1445 (ADDSSKRCYD…MRKASLNMQL (187 aa)) form a methyltransferase (CMet) domain region. Positions 1683-1985 (EFMKMPVFTE…QHHRNESTVL (303 aa)) are enoyl reductase (ER) (ER) domain. The tract at residues 2008-2191 (ATYVVSGGRG…YMSLNVGTIE (184 aa)) is ketoreductase (KR) domain. In terms of domain architecture, Carrier spans 2293 to 2375 (TRDFEKISQL…SLGAKVASRS (83 aa)). S2335 is subject to O-(pantetheine 4'-phosphoryl)serine.

The protein operates within mycotoxin biosynthesis. Its function is as follows. Highly reducing polyketide synthase; part of the gene clusters that mediate the biosynthesis of the host-selective toxins (HSTs) AF-toxins responsible for Alternaria black spot of strawberry disease by the strawberry pathotype. AF-toxin I and III are valine derivatives of 2,3-dyhydroxy-isovaleric acid and 2-hydroxy-isovaleric acid respectively, while AF II is an isoleucine derivative of 2-hydroxy-valeric acid. These derivatives are bound to a 9,10-epoxy-8-hydroxy-9-methyl-decatrienoic acid (EDA) moiety. On cellular level, AF-toxins affect plasma membrane of susceptible cells and cause a sudden increase in loss of K(+) after a few minutes of toxin treatment. The aldo-keto reductase AFTS1 catalyzes the conversion of 2-keto-isovaleric acid (2-KIV) to 2-hydroxy-isovaleric acid (2-HIV) by reduction of its ketone to an alcohol. The acyl-CoA ligase AFT1, the hydrolase AFT2 and the enoyl-CoA hydratases AFT3 and AFT6, but also the polyketide synthase AFT9, the acyl-CoA dehydrogenase AFT10, the cytochrome P450 monooxygenase AFT11 and the oxidoreductase AFT12 are all involved in the biosynthesis of the AK-, AF- and ACT-toxin common EDA structural moiety. The exact function of each enzyme, and of additional enzymes identified within the AF-toxin clusters have still to be determined. This Alternaria alternata (Alternaria rot fungus) protein is Highly reducing polyketide synthase AFT9-1.